A 358-amino-acid polypeptide reads, in one-letter code: 3-dehydroquinate synthase (358 aa).

NAD(+) contacts are provided by residues 75–80 (SGEGSK), 109–113 (GVLGD), 133–134 (TT), K146, and K155. Positions 188, 245, and 262 each coordinate Zn(2+).

Belongs to the sugar phosphate cyclases superfamily. Dehydroquinate synthase family. Co(2+) is required as a cofactor. The cofactor is Zn(2+). It depends on NAD(+) as a cofactor.

It localises to the cytoplasm. The enzyme catalyses 7-phospho-2-dehydro-3-deoxy-D-arabino-heptonate = 3-dehydroquinate + phosphate. It participates in metabolic intermediate biosynthesis; chorismate biosynthesis; chorismate from D-erythrose 4-phosphate and phosphoenolpyruvate: step 2/7. Its function is as follows. Catalyzes the conversion of 3-deoxy-D-arabino-heptulosonate 7-phosphate (DAHP) to dehydroquinate (DHQ). The sequence is that of 3-dehydroquinate synthase from Methylacidiphilum infernorum (isolate V4) (Methylokorus infernorum (strain V4)).